The primary structure comprises 193 residues: dTTP/UTP pyrophosphatase (193 aa).

The active-site Proton acceptor is aspartate 71.

This sequence belongs to the Maf family. YhdE subfamily. A divalent metal cation is required as a cofactor.

The protein resides in the cytoplasm. It catalyses the reaction dTTP + H2O = dTMP + diphosphate + H(+). The enzyme catalyses UTP + H2O = UMP + diphosphate + H(+). Its function is as follows. Nucleoside triphosphate pyrophosphatase that hydrolyzes dTTP and UTP. May have a dual role in cell division arrest and in preventing the incorporation of modified nucleotides into cellular nucleic acids. This chain is dTTP/UTP pyrophosphatase, found in Geobacter sp. (strain M21).